The chain runs to 50 residues: MVRNKAKGFPNQNNNKFEGEPRAKDDYASKRADGSINSHPQERMRASGRR.

The tract at residues 1 to 50 is disordered; it reads MVRNKAKGFPNQNNNKFEGEPRAKDDYASKRADGSINSHPQERMRASGRR. Basic and acidic residues-rich tracts occupy residues 17 to 33 and 40 to 50; these read FEGE…KRAD and PQERMRASGRR.

Belongs to the SspK family.

It is found in the spore core. This chain is Small, acid-soluble spore protein K, found in Bacillus velezensis (strain DSM 23117 / BGSC 10A6 / LMG 26770 / FZB42) (Bacillus amyloliquefaciens subsp. plantarum).